The primary structure comprises 894 residues: Disease resistance protein SUMM2 (894 aa).

The stretch at 31–71 (ELSKNVVAMKKDMEVLKKKRDDVKRRVDIEEFTRRRERLSQ) forms a coiled coil. Residues 140–443 (TLATPIARIE…CEGFIDENES (304 aa)) form the NB-ARC domain. 183–190 (GMGGVGKT) is a binding site for ATP. 7 LRR repeats span residues 517–538 (SVRR…PECL), 539–561 (ELTT…FFRC), 564–586 (MLVV…ISKL), 588–610 (SLRY…QELK), 611–633 (KLRY…SNIS), 634–656 (SLRK…EELQ), and 660–681 (HLEV…LNAP).

It belongs to the disease resistance NB-LRR family. Interacts with PAT1.

Negatively regulated by the MEKK1-MKK1-MKK2-MPK4 kinase cascade. Disease resistance protein that mediates defense responses against the bacterial pathogen Pseudomonas syringae pv tomato strain DC3000, and the virulent oomycete Hyaloperonospora arabidopsidis isolate Noco2. Becomes active when the MEKK1-MKK1-MKK2-MPK4 kinase cascade is disrupted by the microbial effector hopAI1. Does not seem to be required for the activation of MPK4 by flg22, or flg22-induced up-regulation of PAD3. Functions downstream of MEKK2/SUMM1 in immune responses, including cell death and defense responses. The polypeptide is Disease resistance protein SUMM2 (Arabidopsis thaliana (Mouse-ear cress)).